The sequence spans 395 residues: Chalcone synthase (395 aa).

Residue Cys164 is part of the active site.

The protein belongs to the thiolase-like superfamily. Chalcone/stilbene synthases family.

It carries out the reaction (E)-4-coumaroyl-CoA + 3 malonyl-CoA + 3 H(+) = 2',4,4',6'-tetrahydroxychalcone + 3 CO2 + 4 CoA. It participates in secondary metabolite biosynthesis; flavonoid biosynthesis. The primary product of this enzyme is 4,2',4',6'-tetrahydroxychalcone (also termed naringenin-chalcone or chalcone) which can under specific conditions spontaneously isomerize into naringenin. The protein is Chalcone synthase (CHS) of Betula pendula (European white birch).